Here is a 295-residue protein sequence, read N- to C-terminus: MNLSGLNMRGLLLADEPMSRHTSLRVGGPADLFAIPEDADDLQGLLRQLKERGIPWLAIGRGNNLLVRDSGIRGAVISLERFNRVEALGQGRIRAGAGAENLAVVRFAQEQGLGGIGFISGIPGTVGGAIRMNAGAYGTGIMERTESLTLLHDGNVREFGRDELEYGYRHLDLAAGDIILEALFRLDQREAEQTEEEIRKDLELRRAKHSVGFPSAGSFFKNPAGQTAWRLIDATGMRGERVGGAQVSQVHSNFLVNTGGATAGDFLELSRVVKKAVLASCGVTLEEEVRIVGEE.

Residues 25-189 (RVGGPADLFA…LEALFRLDQR (165 aa)) form the FAD-binding PCMH-type domain. R169 is an active-site residue. S218 functions as the Proton donor in the catalytic mechanism. E288 is an active-site residue.

The protein belongs to the MurB family. The cofactor is FAD.

It is found in the cytoplasm. The catalysed reaction is UDP-N-acetyl-alpha-D-muramate + NADP(+) = UDP-N-acetyl-3-O-(1-carboxyvinyl)-alpha-D-glucosamine + NADPH + H(+). It functions in the pathway cell wall biogenesis; peptidoglycan biosynthesis. Cell wall formation. This chain is UDP-N-acetylenolpyruvoylglucosamine reductase, found in Pelobacter propionicus (strain DSM 2379 / NBRC 103807 / OttBd1).